The primary structure comprises 232 residues: Putative homeobox protein NANOG2 (232 aa).

Residues 1-10 show a composition bias toward basic and acidic residues; sequence MDLPIEDSHD. Residues 1-39 are disordered; that stretch reads MDLPIEDSHDSSTSPKGKQPTTAEKSATKKEDKVPVKKQ. Residues 11 to 25 show a composition bias toward polar residues; that stretch reads SSTSPKGKQPTTAEK. Residues 26–35 are compositionally biased toward basic and acidic residues; the sequence is SATKKEDKVP. Repeat copies occupy residues 123-127, 128-132, 133-137, 143-147, 148-152, 153-157, 158-162, and 163-167. The tract at residues 123-167 is 8 X repeats starting with a Trp in each unit; sequence WSNQTWNNSIWSNETQNIQSWSNHSWNTQTWCTQSWNNQAWNSPF. A sufficient for transactivation activity region spans residues 123-167; that stretch reads WSNQTWNNSIWSNETQNIQSWSNHSWNTQTWCTQSWNNQAWNSPF. A sufficient for strong transactivation activity region spans residues 168 to 232; sequence YNCGEESLQS…YSTNMQPEDV (65 aa).

This sequence belongs to the Nanog homeobox family.

It is found in the nucleus. In terms of biological role, probable transcriptional regulator. The protein is Putative homeobox protein NANOG2 (NANOGP1) of Pan troglodytes (Chimpanzee).